The sequence spans 393 residues: Protein TsgA (393 aa).

12 helical membrane-spanning segments follow: residues 11–31 (WISFLSYALTGALVIVTGMVM), 51–71 (FLNAGILISIFLNAWLMEIVP), 78–98 (FGFLLMVLAVAGLMFSHSLAL), 101–121 (TAMFILGVVSGITMSIGTFLI), 140–160 (FFSMAGMIFPMIAAFLLAHSI), 162–182 (WYWVYACIGLVYVAIFILTFG), 206–226 (IGVLFLSVAALCYILGQLGFI), 245–265 (TLVSNFWMSYMVGMWAFSFIL), 273–293 (ILTVLAGLAAILMYVFNTGTP), 297–317 (AWSILALGFFSSAIYTTIITL), 332–352 (FVLTCGTIGTMLTFVVTGPIV), and 361–381 (LLTANGLYAVVFVMCFLLGFV).

It belongs to the major facilitator superfamily. TsgA family.

Its subcellular location is the cell inner membrane. This chain is Protein TsgA, found in Shigella boydii serotype 18 (strain CDC 3083-94 / BS512).